Reading from the N-terminus, the 424-residue chain is 5-methylthioadenosine/S-adenosylhomocysteine deaminase (424 aa).

Histidine 60 and histidine 62 together coordinate Zn(2+). Positions 89 and 181 each coordinate substrate. Histidine 208 is a Zn(2+) binding site. 2 residues coordinate substrate: glutamate 211 and aspartate 296. Aspartate 296 is a binding site for Zn(2+).

Belongs to the metallo-dependent hydrolases superfamily. MTA/SAH deaminase family. It depends on Zn(2+) as a cofactor.

It catalyses the reaction S-adenosyl-L-homocysteine + H2O + H(+) = S-inosyl-L-homocysteine + NH4(+). The catalysed reaction is S-methyl-5'-thioadenosine + H2O + H(+) = S-methyl-5'-thioinosine + NH4(+). Catalyzes the deamination of 5-methylthioadenosine and S-adenosyl-L-homocysteine into 5-methylthioinosine and S-inosyl-L-homocysteine, respectively. Is also able to deaminate adenosine. This is 5-methylthioadenosine/S-adenosylhomocysteine deaminase from Thermococcus onnurineus (strain NA1).